Here is a 678-residue protein sequence, read N- to C-terminus: Protein CASP (678 aa).

The Cytoplasmic segment spans residues 1–619; sequence MAANVGSMFQ…LVLSNKMART (619 aa). Coiled-coil stretches lie at residues 67-450 and 502-556; these read LLKS…QDLS and LSII…FLQS. Residue serine 586 is modified to Phosphoserine. A helical; Anchor for type IV membrane protein membrane pass occupies residues 620-640; the sequence is IGFFYTLFLHCLVFLVLYKLA. Residues 641–678 lie on the Lumenal side of the membrane; it reads WSESMERDCATFCAKKFADHLHKFHENDNGAAAGDLWQ.

It belongs to the CASP family. As to quaternary structure, homodimer; disulfide-linked. Interacts with GOLGA5.

The protein resides in the golgi apparatus membrane. May be involved in intra-Golgi retrograde transport. The polypeptide is Protein CASP (CUX1) (Homo sapiens (Human)).